A 1012-amino-acid polypeptide reads, in one-letter code: Antigenic heat-stable 120 kDa protein (1012 aa).

Disordered stretches follow at residues 1-73 (DTSE…TSDP) and 348-396 (GQSK…PQSQ). Residues 12–27 (EYTEEQKQTLEQEQKE) are compositionally biased toward basic and acidic residues. Residues 47–61 (SASSAQSTPSMSALS) show a composition bias toward low complexity. Composition is skewed to polar residues over residues 62–73 (GNISPDSQTSDP), 348–373 (GQSK…QYKQ), and 380–396 (PTNQ…PQSQ).

Its subcellular location is the cytoplasm. This chain is Antigenic heat-stable 120 kDa protein (sca4), found in Rickettsia slovaca.